The primary structure comprises 598 residues: Aspartate--tRNA(Asp/Asn) ligase (598 aa).

Position 173 (Glu-173) interacts with L-aspartate. Residues 197–200 (QLFK) form an aspartate region. Residue Arg-219 coordinates L-aspartate. ATP-binding positions include 219–221 (RDE) and Gln-228. L-aspartate is bound at residue His-448. Glu-482 provides a ligand contact to ATP. Residue Arg-489 coordinates L-aspartate. 534–537 (GWDR) is a binding site for ATP. Positions 560 to 598 (GYDPLTAAPAPITAQQRKEAGVDAKPETKKAAAGEPAGA) are disordered. Residues 575–591 (QRKEAGVDAKPETKKAA) show a composition bias toward basic and acidic residues.

The protein belongs to the class-II aminoacyl-tRNA synthetase family. Type 1 subfamily. As to quaternary structure, homodimer.

It is found in the cytoplasm. The catalysed reaction is tRNA(Asx) + L-aspartate + ATP = L-aspartyl-tRNA(Asx) + AMP + diphosphate. Functionally, aspartyl-tRNA synthetase with relaxed tRNA specificity since it is able to aspartylate not only its cognate tRNA(Asp) but also tRNA(Asn). Reaction proceeds in two steps: L-aspartate is first activated by ATP to form Asp-AMP and then transferred to the acceptor end of tRNA(Asp/Asn). This Kineococcus radiotolerans (strain ATCC BAA-149 / DSM 14245 / SRS30216) protein is Aspartate--tRNA(Asp/Asn) ligase.